Reading from the N-terminus, the 560-residue chain is NRAMP-like transporter smf-3 (560 aa).

Residues 1–43 are Cytoplasmic-facing; that stretch reads MEGEMKCPIEEIREKPEMRKAQQTYEVQVEVEDTPDTTFSWRK. Residues 44 to 64 traverse the membrane as a helical segment; sequence LWAFTGPGFLMSIAYLDPGNI. Residues 65–71 are Extracellular-facing; that stretch reads ESDLQAG. The chain crosses the membrane as a helical span at residues 72-92; sequence AISYFKLIWVLLVAHIMGLLL. Residues 93–120 lie on the Cytoplasmic side of the membrane; the sequence is QRLAARLGVVSGKHMAEIAFSYYPKIPR. A helical membrane pass occupies residues 121–141; it reads LVLWMLVESAIVGSDMQEVIG. Residues 142–152 lie on the Extracellular side of the membrane; the sequence is TAISFYLLSNG. The chain crosses the membrane as a helical span at residues 153–173; it reads VIPLWAGVLITICDTFTFLFL. Over 174-182 the chain is Cytoplasmic; that stretch reads EKYGVRKFE. Residues 183-203 form a helical membrane-spanning segment; that stretch reads AFFCFLITCMAITFGYEFGVS. Over 204–229 the chain is Extracellular; it reads APDAGKMFSGMFVPWCNGCDNNMVMQ. The chain crosses the membrane as a helical span at residues 230–250; sequence GVAIIGAVIMPHNFYLHSALV. Topologically, residues 251-268 are cytoplasmic; it reads KSRRVDRRRAEKVTEANK. Residues 269 to 289 form a helical membrane-spanning segment; that stretch reads YFFIESAFALFVSFIINTLVI. Over 290–339 the chain is Extracellular; it reads SVFAQGMYGKTNQDIRDTCYNNTHNGMPDFYKVEFPANNDAAQSDIYHAG. N310 carries an N-linked (GlcNAc...) asparagine glycan. A helical membrane pass occupies residues 340–360; that stretch reads IFLGCTFGIFALYVWAVGILA. The Cytoplasmic portion of the chain corresponds to 361–390; the sequence is AGQSSTMTGTYAGQFAMEGFIQIKLPQWKR. Residues 391-411 traverse the membrane as a helical segment; that stretch reads ILITRSLAILPTLAVVIFSGG. Over 412–420 the chain is Extracellular; sequence IDNISSLND. An N-linked (GlcNAc...) asparagine glycan is attached at N414. A helical transmembrane segment spans residues 421–441; the sequence is FLNCLQLIQLPFALIPVLTFV. Topologically, residues 442 to 458 are cytoplasmic; the sequence is SDRNIMHEYKLASVSKV. The chain crosses the membrane as a helical span at residues 459 to 479; sequence VSIVISLIILFINFYFLYSWI. Residues 480–486 lie on the Extracellular side of the membrane; that stretch reads GSTFGYN. Residues 487 to 507 traverse the membrane as a helical segment; the sequence is AVSIPITIFCAIFYIIFIAYL. Residues 508-560 are Cytoplasmic-facing; the sequence is TYYCLVAMEFISPIQTKWLAEPIYHDFDAPWLEDSENPSTKNTISDDELSMRY.

It belongs to the NRAMP family. As to expression, expressed in dopaminergic neurons (at protein level). Expressed in intestine with a weaker expression in the most proximal and distal regions. Weakly expressed in the hyp1-6, hyp7 and hyp8-12 hypodermis and in head and tail neurons.

The protein localises to the apical cell membrane. Its subcellular location is the cytoplasmic vesicle membrane. Its function is as follows. Probable divalent metal ion transporter which regulates the uptake of several heavy metals such as Mn(2+), Al(3+) and iron. Plays a role in modulating Al(3+)-induced dopamine (DA) neuron degeneration through the intracellular sequestration of Al(3+). The polypeptide is NRAMP-like transporter smf-3 (Caenorhabditis elegans).